The sequence spans 161 residues: Troponin C, slow skeletal and cardiac muscles (161 aa).

The residue at position 1 (Met-1) is an N-acetylmethionine. EF-hand domains follow at residues 16–51 (QKNE…LGQN), 52–87 (PTPE…CMKD), 92–127 (KTEE…TGET), and 128–161 (ITED…KGVE). Residues Asp-65, Asp-67, Ser-69, Thr-71, Asp-105, Asn-107, Asp-109, Tyr-111, Glu-116, Asn-143, Asp-145, Arg-147, and Glu-152 each coordinate Ca(2+).

Belongs to the troponin C family.

In terms of biological role, troponin is the central regulatory protein of striated muscle contraction. Tn consists of three components: Tn-I which is the inhibitor of actomyosin ATPase, Tn-T which contains the binding site for tropomyosin and Tn-C. The binding of calcium to Tn-C abolishes the inhibitory action of Tn on actin filaments. The sequence is that of Troponin C, slow skeletal and cardiac muscles (TNNC1) from Coturnix japonica (Japanese quail).